The sequence spans 118 residues: Large ribosomal subunit protein bL20 (118 aa).

This sequence belongs to the bacterial ribosomal protein bL20 family.

Binds directly to 23S ribosomal RNA and is necessary for the in vitro assembly process of the 50S ribosomal subunit. It is not involved in the protein synthesizing functions of that subunit. The protein is Large ribosomal subunit protein bL20 of Staphylococcus saprophyticus subsp. saprophyticus (strain ATCC 15305 / DSM 20229 / NCIMB 8711 / NCTC 7292 / S-41).